Consider the following 871-residue polypeptide: Probable inorganic carbon transporter subunit DabA (871 aa).

Residues Cys396, Asp398, His577, and Cys592 each contribute to the Zn(2+) site.

Belongs to the inorganic carbon transporter (TC 9.A.2) DabA family. Forms a complex with DabB. Requires Zn(2+) as cofactor.

Its subcellular location is the cell membrane. Part of an energy-coupled inorganic carbon pump. The polypeptide is Probable inorganic carbon transporter subunit DabA (Bacillus subtilis (strain 168)).